The primary structure comprises 78 residues: Omega-conotoxin-like Ac6.5 (78 aa).

Residues 1-22 (MKLTCVVIVAVLLLTACQLLTA) form the signal peptide. The propeptide occupies 23–42 (DDSRGTQKHRSLRSTTKVSK). 3 disulfides stabilise this stretch: C46/C62, C53/C65, and C61/C72. 2 positions are modified to 4-hydroxyproline: P55 and P67.

This sequence belongs to the conotoxin O1 superfamily. As to expression, expressed by the venom duct.

The protein localises to the secreted. Omega-conotoxins act at presynaptic membranes, they bind and block voltage-gated calcium channels (Cav). The chain is Omega-conotoxin-like Ac6.5 from Conus achatinus (Little frog cone).